A 528-amino-acid polypeptide reads, in one-letter code: Cytochrome P450 monooxygenase lenC (528 aa).

A helical transmembrane segment spans residues 5–27 (FVLPHPASMGASCILGLLLLTIL). Residue cysteine 469 coordinates heme.

This sequence belongs to the cytochrome P450 family. Requires heme as cofactor.

The protein localises to the membrane. Its pathway is alkaloid biosynthesis. Its function is as follows. Nonribosomal peptide synthetase; part of the gene cluster that mediates the biosynthesis of the ergot alkaloids lentopeptins A and B. Within the pathway, lenC catalyzes the post-NRPS oxidative modification steps using as substrate the N-acyldiketopiperazine intermediate produced by the NRPS lenA. Lentopeptin A forms via a stereospecific hydroxylation, followed by a spontaneous bicyclic lactam core formation, while lentopeptin B is produced through an initial dehydrogenation, followed by a bicyclic lactam core formation and stereospecific hydration. The phenylalanine ammonia-lyase lenB provides the cinnamic acid starter unit to the NRPS lenA for the synthesis of the N-acyldiketopiperazine intermediate which in turn is converted into lentopeptins A and B by lenC. This Aspergillus lentulus protein is Cytochrome P450 monooxygenase lenC.